The sequence spans 262 residues: Large ribosomal subunit protein uL5c (262 aa).

Residues 1–39 (MASPSLLQSSASSFHGRFSPLAAPSSARMLSPPLRNVVK) constitute a chloroplast transit peptide.

The protein belongs to the universal ribosomal protein uL5 family. Part of the 50S ribosomal subunit; contacts the 5S rRNA.

Its subcellular location is the plastid. The protein localises to the chloroplast. In terms of biological role, binds 5S rRNA, forms part of the central protuberance of the 50S subunit. This is Large ribosomal subunit protein uL5c (RPL5) from Arabidopsis thaliana (Mouse-ear cress).